The chain runs to 64 residues: Potassium channel toxin kappa-KTx 3.1 (64 aa).

Positions 1 to 26 are cleaved as a signal peptide; it reads MKSTLMTASVLILVLLSIVDYASVYA. A propeptide spanning residues 27-36 is cleaved from the precursor; that stretch reads EFIDSEISLE. Disulfide bonds link Cys-43–Cys-61 and Cys-47–Cys-57.

This sequence belongs to the short scorpion toxin superfamily. Potassium channel inhibitor kappa-KTx family. Kappa-KTx 3 subfamily. As to expression, expressed by the venom gland.

The protein localises to the secreted. In terms of biological role, potassium channel inhibitor (Kv). This Heterometrus petersii (Asian forest scorpion) protein is Potassium channel toxin kappa-KTx 3.1.